The chain runs to 591 residues: 2-succinyl-5-enolpyruvyl-6-hydroxy-3-cyclohexene-1-carboxylate synthase (591 aa).

This sequence belongs to the TPP enzyme family. MenD subfamily. Homodimer. The cofactor is Mg(2+). Mn(2+) serves as cofactor. It depends on thiamine diphosphate as a cofactor.

The enzyme catalyses isochorismate + 2-oxoglutarate + H(+) = 5-enolpyruvoyl-6-hydroxy-2-succinyl-cyclohex-3-ene-1-carboxylate + CO2. It participates in quinol/quinone metabolism; 1,4-dihydroxy-2-naphthoate biosynthesis; 1,4-dihydroxy-2-naphthoate from chorismate: step 2/7. The protein operates within cofactor biosynthesis; phylloquinone biosynthesis. Its function is as follows. Catalyzes the thiamine diphosphate-dependent decarboxylation of 2-oxoglutarate and the subsequent addition of the resulting succinic semialdehyde-thiamine pyrophosphate anion to isochorismate to yield 2-succinyl-5-enolpyruvyl-6-hydroxy-3-cyclohexene-1-carboxylate (SEPHCHC). The chain is 2-succinyl-5-enolpyruvyl-6-hydroxy-3-cyclohexene-1-carboxylate synthase from Rippkaea orientalis (strain PCC 8801 / RF-1) (Cyanothece sp. (strain PCC 8801)).